A 404-amino-acid chain; its full sequence is L-cysteine:1D-myo-inositol 2-amino-2-deoxy-alpha-D-glucopyranoside ligase (404 aa).

The segment at 1-20 (MRTWPTPDVPPLPRTGAPAP) is disordered. Residue cysteine 45 coordinates Zn(2+). L-cysteinyl-5'-AMP-binding positions include 45–48 (CGIT), threonine 60, and 83–85 (NVT). The 'HIGH' region signature appears at 47–57 (ITPYDATHLGH). Positions 185–190 (ERGGDP) match the 'ERGGDP' region motif. Residues 185–216 (ERGGDPDRPGKKHPLDPALWRGEQPGEPSWDG) are disordered. Residues 186-199 (RGGDPDRPGKKHPL) show a composition bias toward basic and acidic residues. Residue tryptophan 226 participates in L-cysteinyl-5'-AMP binding. A Zn(2+)-binding site is contributed by cysteine 230. 248 to 250 (GAD) lines the L-cysteinyl-5'-AMP pocket. Position 255 (histidine 255) interacts with Zn(2+). L-cysteinyl-5'-AMP is bound at residue leucine 280. A 'KMSKS' region motif is present at residues 286-290 (KMSKS).

The protein belongs to the class-I aminoacyl-tRNA synthetase family. MshC subfamily. As to quaternary structure, monomer. The cofactor is Zn(2+).

The enzyme catalyses 1D-myo-inositol 2-amino-2-deoxy-alpha-D-glucopyranoside + L-cysteine + ATP = 1D-myo-inositol 2-(L-cysteinylamino)-2-deoxy-alpha-D-glucopyranoside + AMP + diphosphate + H(+). Functionally, catalyzes the ATP-dependent condensation of GlcN-Ins and L-cysteine to form L-Cys-GlcN-Ins. This is L-cysteine:1D-myo-inositol 2-amino-2-deoxy-alpha-D-glucopyranoside ligase from Xylanimonas cellulosilytica (strain DSM 15894 / JCM 12276 / CECT 5975 / KCTC 9989 / LMG 20990 / NBRC 107835 / XIL07).